Here is a 151-residue protein sequence, read N- to C-terminus: FAD synthase (151 aa).

ATP-binding positions include 21–22 (TF), 26–29 (HPGH), and aspartate 104.

Belongs to the archaeal FAD synthase family. In terms of assembly, homodimer. The cofactor is a divalent metal cation.

It catalyses the reaction FMN + ATP + H(+) = FAD + diphosphate. The protein operates within cofactor biosynthesis; FAD biosynthesis; FAD from FMN: step 1/1. In terms of biological role, catalyzes the transfer of the AMP portion of ATP to flavin mononucleotide (FMN) to produce flavin adenine dinucleotide (FAD) coenzyme. In Methanosarcina mazei (strain ATCC BAA-159 / DSM 3647 / Goe1 / Go1 / JCM 11833 / OCM 88) (Methanosarcina frisia), this protein is FAD synthase.